The following is a 219-amino-acid chain: Ribose-5-phosphate isomerase A (219 aa).

Substrate-binding positions include 28–31, 81–84, and 94–97; these read SGST, DGAD, and KGGG. Catalysis depends on E103, which acts as the Proton acceptor. Residue K121 participates in substrate binding.

The protein belongs to the ribose 5-phosphate isomerase family. As to quaternary structure, homodimer.

The enzyme catalyses aldehydo-D-ribose 5-phosphate = D-ribulose 5-phosphate. The protein operates within carbohydrate degradation; pentose phosphate pathway; D-ribose 5-phosphate from D-ribulose 5-phosphate (non-oxidative stage): step 1/1. In terms of biological role, catalyzes the reversible conversion of ribose-5-phosphate to ribulose 5-phosphate. This chain is Ribose-5-phosphate isomerase A, found in Actinobacillus succinogenes (strain ATCC 55618 / DSM 22257 / CCUG 43843 / 130Z).